The primary structure comprises 749 residues: 5-methyltetrahydropteroyltriglutamate--homocysteine methyltransferase (749 aa).

5-methyltetrahydropteroyltri-L-glutamate contacts are provided by residues Arg18–Lys21 and Lys112. Residues Ile420–Ser422 and Glu473 contribute to the L-homocysteine site. Residues Ile420 to Ser422 and Glu473 contribute to the L-methionine site. Residue Trp550 coordinates 5-methyltetrahydropteroyltri-L-glutamate. Asp588 provides a ligand contact to L-homocysteine. L-methionine is bound at residue Asp588. Position 594 (Glu594) interacts with 5-methyltetrahydropteroyltri-L-glutamate. Residues His630, Cys632, and Glu654 each contribute to the Zn(2+) site. His683 acts as the Proton donor in catalysis. Cys715 provides a ligand contact to Zn(2+).

The protein belongs to the vitamin-B12 independent methionine synthase family. Zn(2+) serves as cofactor.

The enzyme catalyses 5-methyltetrahydropteroyltri-L-glutamate + L-homocysteine = tetrahydropteroyltri-L-glutamate + L-methionine. The protein operates within amino-acid biosynthesis; L-methionine biosynthesis via de novo pathway; L-methionine from L-homocysteine (MetE route): step 1/1. Catalyzes the transfer of a methyl group from 5-methyltetrahydrofolate to homocysteine resulting in methionine formation. This Staphylococcus haemolyticus (strain JCSC1435) protein is 5-methyltetrahydropteroyltriglutamate--homocysteine methyltransferase.